A 413-amino-acid polypeptide reads, in one-letter code: 3-oxo-tetronate kinase (413 aa).

ATP-binding positions include S254, 354-357 (GGET), and G397.

Belongs to the four-carbon acid sugar kinase family.

The enzyme catalyses 3-dehydro-L-erythronate + ATP = 3-dehydro-4-O-phospho-L-erythronate + ADP + H(+). It catalyses the reaction 3-dehydro-D-erythronate + ATP = 3-dehydro-4-O-phospho-D-erythronate + ADP + H(+). Functionally, catalyzes the ATP-dependent phosphorylation of 3-oxo-tetronate to 3-oxo-tetronate 4-phosphate. The sequence is that of 3-oxo-tetronate kinase from Haemophilus influenzae (strain ATCC 51907 / DSM 11121 / KW20 / Rd).